A 561-amino-acid polypeptide reads, in one-letter code: Phosphoinositide phospholipase C 1 (561 aa).

The EF-hand domain maps to 21–54 (EPPEEIKNLFHDYSQDDRMSADEMLRFVIQVQGE). Residues 105-249 (QDMNQPLSHY…LKNKILISTK (145 aa)) enclose the PI-PLC X-box domain. Catalysis depends on residues histidine 120 and histidine 166. Residues 256–266 (QTQISKGSTTD) show a composition bias toward polar residues. Positions 256 to 285 (QTQISKGSTTDESTRAKKISDAEEQVQEED) are disordered. Basic and acidic residues predominate over residues 267–276 (ESTRAKKISD). In terms of domain architecture, PI-PLC Y-box spans 294 to 410 (RDLISIHAGN…GYVKKPDVLL (117 aa)). The 128-residue stretch at 414 to 541 (PEGEIFDPCS…PGIRAVRLHD (128 aa)) folds into the C2 domain. Residues aspartate 452, aspartate 458, aspartate 510, aspartate 512, and aspartate 518 each contribute to the Ca(2+) site.

It depends on Ca(2+) as a cofactor. Expressed in stems, leaves, roots, flowers and siliques. Predominant in the vascular tissues of roots and leaves.

It is found in the cell membrane. It catalyses the reaction a 1,2-diacyl-sn-glycero-3-phospho-(1D-myo-inositol-4,5-bisphosphate) + H2O = 1D-myo-inositol 1,4,5-trisphosphate + a 1,2-diacyl-sn-glycerol + H(+). Functionally, the production of the second messenger molecules diacylglycerol (DAG) and inositol 1,4,5-trisphosphate (IP3) is mediated by activated phosphatidylinositol-specific phospholipase C enzymes. Required for secondary responses to abscisic acid signals. This chain is Phosphoinositide phospholipase C 1 (PLC1), found in Arabidopsis thaliana (Mouse-ear cress).